Here is a 403-residue protein sequence, read N- to C-terminus: F-box only protein 22 (403 aa).

Met-1 is modified (N-acetylmethionine). An F-box domain is found at 19-71 (STFVLSNLAEVVERVLTFLPAKALLRVACVCRLWRECVRRVLRTHRSVTWISA). Position 128 is a phosphoserine (Ser-128). Residue Lys-194 is modified to N6-acetyllysine.

As to quaternary structure, directly interacts with SKP1 and CUL1.

The protein localises to the cytoplasm. The protein resides in the myofibril. Its subcellular location is the sarcomere. It is found in the z line. In terms of biological role, substrate-recognition component of the SCF (SKP1-CUL1-F-box protein)-type E3 ubiquitin ligase complex. Promotes the proteasome-dependent degradation of key sarcomeric proteins, such as alpha-actinin (ACTN2) and filamin-C (FLNC), essential for maintenance of normal contractile function. This chain is F-box only protein 22 (FBXO22), found in Pongo abelii (Sumatran orangutan).